The sequence spans 518 residues: Probable thiamine biosynthetic bifunctional enzyme (518 aa).

The segment at 1–229 (MKRQIDYSLY…ATPPCFAQAR (229 aa)) is thiamine-phosphate synthase. 4-amino-2-methyl-5-(diphosphooxymethyl)pyrimidine is bound by residues 40 to 44 (QHREK) and asparagine 72. Residues aspartate 73 and aspartate 92 each coordinate Mg(2+). Serine 111 provides a ligand contact to 4-amino-2-methyl-5-(diphosphooxymethyl)pyrimidine. Position 137-139 (137-139 (TNT)) interacts with 2-[(2R,5Z)-2-carboxy-4-methylthiazol-5(2H)-ylidene]ethyl phosphate. Lysine 140 serves as a coordination point for 4-amino-2-methyl-5-(diphosphooxymethyl)pyrimidine. 2-[(2R,5Z)-2-carboxy-4-methylthiazol-5(2H)-ylidene]ethyl phosphate-binding positions include glycine 173 and 199-200 (VS). The segment at 230–518 (SSLTTPKDLL…IERAKLEKAE (289 aa)) is hydroxyethylthiazole kinase. 5-(2-hydroxyethyl)-4-methylthiazole is bound at residue methionine 281. Positions 355 and 403 each coordinate ATP. Position 430 (alanine 430) interacts with 5-(2-hydroxyethyl)-4-methylthiazole. Cysteine 433 functions as the Proton acceptor; for hydroxyethylthiazole kinase activity in the catalytic mechanism.

In the N-terminal section; belongs to the thiamine-phosphate synthase family. The protein in the C-terminal section; belongs to the Thz kinase family. It depends on Mg(2+) as a cofactor.

The catalysed reaction is 2-[(2R,5Z)-2-carboxy-4-methylthiazol-5(2H)-ylidene]ethyl phosphate + 4-amino-2-methyl-5-(diphosphooxymethyl)pyrimidine + 2 H(+) = thiamine phosphate + CO2 + diphosphate. It catalyses the reaction 2-(2-carboxy-4-methylthiazol-5-yl)ethyl phosphate + 4-amino-2-methyl-5-(diphosphooxymethyl)pyrimidine + 2 H(+) = thiamine phosphate + CO2 + diphosphate. It carries out the reaction 4-methyl-5-(2-phosphooxyethyl)-thiazole + 4-amino-2-methyl-5-(diphosphooxymethyl)pyrimidine + H(+) = thiamine phosphate + diphosphate. The enzyme catalyses 5-(2-hydroxyethyl)-4-methylthiazole + ATP = 4-methyl-5-(2-phosphooxyethyl)-thiazole + ADP + H(+). It participates in cofactor biosynthesis; thiamine diphosphate biosynthesis; 4-methyl-5-(2-phosphoethyl)-thiazole from 5-(2-hydroxyethyl)-4-methylthiazole: step 1/1. Its pathway is cofactor biosynthesis; thiamine diphosphate biosynthesis; thiamine phosphate from 4-amino-2-methyl-5-diphosphomethylpyrimidine and 4-methyl-5-(2-phosphoethyl)-thiazole: step 1/1. Its function is as follows. Condenses 4-methyl-5-(beta-hydroxyethyl)thiazole monophosphate (THZ-P) and 2-methyl-4-amino-5-hydroxymethyl pyrimidine pyrophosphate (HMP-PP) to form thiamine monophosphate (TMP). The polypeptide is Probable thiamine biosynthetic bifunctional enzyme (thi4) (Schizosaccharomyces pombe (strain 972 / ATCC 24843) (Fission yeast)).